The chain runs to 766 residues: Subtilisin-like protease SBT3.13 (766 aa).

The signal sequence occupies residues 1–21 (MNNSLQSSKLVLLLAIALVLF). A propeptide spans 22–120 (LNTELDFLTA…VIPNRIRKLK (99 aa)) (activation peptide). The Inhibitor I9 domain occupies 41-119 (VYIVYLGERE…HVIPNRIRKL (79 aa)). The Peptidase S8 domain maps to 134-618 (PTSFSSLSSV…GGLVNPEKAA (485 aa)). Catalysis depends on aspartate 162, which acts as the Charge relay system. N-linked (GlcNAc...) asparagine glycans are attached at residues asparagine 195 and asparagine 223. The Charge relay system role is filled by histidine 239. 2 N-linked (GlcNAc...) asparagine glycosylation sites follow: asparagine 254 and asparagine 389. Serine 549 acts as the Charge relay system in catalysis. Asparagine 641 is a glycosylation site (N-linked (GlcNAc...) asparagine).

It belongs to the peptidase S8 family.

The protein localises to the secreted. This Arabidopsis thaliana (Mouse-ear cress) protein is Subtilisin-like protease SBT3.13.